We begin with the raw amino-acid sequence, 325 residues long: Golgi to ER traffic protein 4 homolog B (325 aa).

Disordered regions lie at residues 1 to 22 (MAAAMAEQEGSKGSARNRGGVQ) and 306 to 325 (SGEDDDVEDGQEDSSPIELD). Positions 307–317 (GEDDDVEDGQE) are enriched in acidic residues.

It belongs to the GET4 family. In terms of assembly, component of the bag6/bat3 complex.

Its subcellular location is the cytoplasm. The protein resides in the cytosol. As part of a cytosolic protein quality control complex, the bag6/bat3 complex, maintains misfolded and hydrophobic patches-containing proteins in a soluble state and participates in their proper delivery to the endoplasmic reticulum or alternatively can promote their sorting to the proteasome where they undergo degradation. The bag6/bat3 complex is involved in the post-translational delivery of tail-anchored/type II transmembrane proteins to the endoplasmic reticulum membrane. Similarly, the bag6/bat3 complex also functions as a sorting platform for proteins of the secretory pathway that are mislocalized to the cytosol either delivering them to the proteasome for degradation or to the endoplasmic reticulum. The bag6/bat3 complex also plays a role in the endoplasmic reticulum-associated degradation (ERAD), a quality control mechanism that eliminates unwanted proteins of the endoplasmic reticulum through their retrotranslocation to the cytosol and their targeting to the proteasome. It maintains these retrotranslocated proteins in an unfolded yet soluble state condition in the cytosol to ensure their proper delivery to the proteasome. This is Golgi to ER traffic protein 4 homolog B (get4-b) from Xenopus laevis (African clawed frog).